A 327-amino-acid polypeptide reads, in one-letter code: Biotin synthase (327 aa).

A Radical SAM core domain is found at 42–268; sequence NKVQKASLLS…VMPASTVRLS (227 aa). Positions 57, 61, and 64 each coordinate [4Fe-4S] cluster. [2Fe-2S] cluster contacts are provided by cysteine 102, cysteine 134, cysteine 194, and arginine 266.

Belongs to the radical SAM superfamily. Biotin synthase family. Homodimer. [4Fe-4S] cluster serves as cofactor. The cofactor is [2Fe-2S] cluster.

It carries out the reaction (4R,5S)-dethiobiotin + (sulfur carrier)-SH + 2 reduced [2Fe-2S]-[ferredoxin] + 2 S-adenosyl-L-methionine = (sulfur carrier)-H + biotin + 2 5'-deoxyadenosine + 2 L-methionine + 2 oxidized [2Fe-2S]-[ferredoxin]. It participates in cofactor biosynthesis; biotin biosynthesis; biotin from 7,8-diaminononanoate: step 2/2. Functionally, catalyzes the conversion of dethiobiotin (DTB) to biotin by the insertion of a sulfur atom into dethiobiotin via a radical-based mechanism. This Rhizobium rhizogenes (strain K84 / ATCC BAA-868) (Agrobacterium radiobacter) protein is Biotin synthase.